Reading from the N-terminus, the 1558-residue chain is Arginine-glutamic acid dipeptide repeats protein (1558 aa).

Basic and acidic residues predominate over residues 1 to 36; it reads MTADKDKDKDKEKDRDRDRDRERDKRDKARESENAR. The disordered stretch occupies residues 1–90; that stretch reads MTADKDKDKD…KKKSRYERTD (90 aa). 2 positions are modified to phosphoserine: Ser53 and Ser56. Over residues 74–85 the composition is skewed to basic residues; that stretch reads KSRKKPPKKKSR. A BAH domain is found at 103–283; the sequence is VVYRPGDCVY…PETRRLNSTQ (181 aa). Residue Thr120 is modified to Phosphothreonine. Phosphoserine is present on residues Ser142 and Ser304. The ELM2 domain maps to 284-387; sequence GEIRVGPSHQ…KALQRLVKKP (104 aa). An SANT domain is found at 391-443; sequence LIEKCWTEDEVKRFVKGLRQYGKNFFRIRKELLPSKETGELITFYYYWKKTPE. Positions 464 to 495 are disordered; that stretch reads TRTASTPVNTPSRPPSSEFLDLSSASEDDFDS. The segment covering 465–474 has biased composition (polar residues); sequence RTASTPVNTP. The span at 479–488 shows a compositional bias: low complexity; the sequence is SSEFLDLSSA. Residues 507–532 form a GATA-type zinc finger; sequence CRHCFTTTSKDWHHGGRENILLCTDC. The disordered stretch occupies residues 542–1125; sequence LPPIEKPVDP…PSHASQSARF (584 aa). Lys560 is covalently cross-linked (Glycyl lysine isopeptide (Lys-Gly) (interchain with G-Cter in SUMO2)). Thr593 is subject to Phosphothreonine. A phosphoserine mark is found at Ser594, Ser600, and Ser613. The span at 609–623 shows a compositional bias: low complexity; sequence SGRNSPSAASTSSND. The span at 624–640 shows a compositional bias: basic and acidic residues; that stretch reads SKAETVKKSAKKVKEEA. Lys637 participates in a covalent cross-link: Glycyl lysine isopeptide (Lys-Gly) (interchain with G-Cter in SUMO2). 4 positions are modified to phosphoserine: Ser642, Ser656, Ser675, and Ser679. The segment covering 652–673 has biased composition (basic and acidic residues); it reads EKVASDTEDTDRITSKKTKTQE. Basic and acidic residues predominate over residues 688–708; that stretch reads SDSRSVNDEGSSDPKDIDQDN. Residues 709–720 show a composition bias toward polar residues; that stretch reads RSTSPSIPSPQD. A compositionally biased stretch (low complexity) spans 726 to 752; sequence DSSAQQQMLQAQPPALQAPSGAASAPS. The segment covering 778 to 792 has biased composition (polar residues); that stretch reads SPATSQPPNQTQSTV. The span at 806–823 shows a compositional bias: pro residues; it reads LHPPRLPSPHPPLQPMTA. 3 stretches are compositionally biased toward low complexity: residues 824–857, 865–874, and 891–901; these read PPSQSSAQPHPQPSLHSQGPPGPHSLQTGPLLQH, GLPSQPSQGQ, and QLPASQSALQP. Pro residues predominate over residues 902–932; that stretch reads QQPPREQPLPPAPLAMPHIKPPPTTPIPQLP. Low complexity predominate over residues 962-972; that stretch reads KPLSSLSTHHP. Over residues 1012-1023 the composition is skewed to polar residues; that stretch reads HPTTGLHQVPSQ. Residues 1027–1053 are compositionally biased toward pro residues; the sequence is PQHPFVPGGPPPITPPSCPPTSTPPAG. Residues 1054–1077 show a composition bias toward low complexity; the sequence is PSSSSQPPCSAAVSSGGSVPGAPS. Phosphoserine is present on residues Ser1098, Ser1105, and Ser1107. The segment covering 1098–1109 has biased composition (pro residues); it reads SPPPPPRSPSPE. Thr1111 carries the phosphothreonine modification. The stretch at 1148–1203 forms a coiled coil; it reads GSKLAKKREEAIEKAKREAEQKAREEREREKEKEKEREREREREREAERAAKASSS. An N6-acetyllysine modification is found at Lys1150. The span at 1154–1198 shows a compositional bias: basic and acidic residues; that stretch reads KREEAIEKAKREAEQKAREEREREKEKEKEREREREREREAERAA. Residues 1154–1238 are disordered; it reads KREEAIEKAK…TTIAAVPPYI (85 aa). Position 1251 is a phosphotyrosine (Tyr1251). The residue at position 1258 (Ser1258) is a Phosphoserine.

In terms of assembly, interacts with HDAC1 and ATN1. Interaction with ATN1 is improved when the poly-Gln region of ATN1 is extended. Interacts with FAT1.

It is found in the nucleus. Its subcellular location is the PML body. Its function is as follows. Plays a role as a transcriptional repressor during development. May play a role in the control of cell survival. The protein is Arginine-glutamic acid dipeptide repeats protein (Rere) of Mus musculus (Mouse).